We begin with the raw amino-acid sequence, 215 residues long: MLQVYLVRHGETQWNAERRIQGQSDSPLTAKGEQQAMQVGERARSLGSTHIISSDLGRTKRTAEIIAQACGCDITFDSRLRELDMGVLEKRQIDSLTEEEEGWRRQLVNGTQDGRIPGGESMQELSDRVHAALASCLELPQGSRPLLVSHGIALGCLVSTILGLPAWAERRLRLRNCSISRIDYQESQWLASGWVVETAGDVSHLDAPALDELQR.

Residues 8-15 (RHGETQWN), 21-22 (QG), R58, K60, 82-85 (ELDM), 104-105 (RR), and 151-152 (GI) contribute to the substrate site. The active-site Tele-phosphohistidine intermediate is the H9. The active-site Proton donor/acceptor is the E82.

It belongs to the phosphoglycerate mutase family. GpmB subfamily.

The enzyme catalyses (2R)-2-phosphoglycerate = (2R)-3-phosphoglycerate. It participates in carbohydrate degradation; glycolysis; pyruvate from D-glyceraldehyde 3-phosphate: step 3/5. The polypeptide is Probable phosphoglycerate mutase GpmB (Salmonella paratyphi C (strain RKS4594)).